Here is a 216-residue protein sequence, read N- to C-terminus: Cytidylate kinase (216 aa).

ATP is bound at residue 7–15 (GPSGTGKST).

The protein belongs to the cytidylate kinase family. Type 1 subfamily.

It localises to the cytoplasm. The enzyme catalyses CMP + ATP = CDP + ADP. It catalyses the reaction dCMP + ATP = dCDP + ADP. This is Cytidylate kinase from Chlamydia trachomatis serovar D (strain ATCC VR-885 / DSM 19411 / UW-3/Cx).